The following is a 110-amino-acid chain: uncharacterized protein (110 aa).

Residues 85-110 form a disordered region; that stretch reads ARKAERPSQGGKDYNGTAKSAQSTTV. Positions 101–110 are enriched in polar residues; that stretch reads TAKSAQSTTV.

This is an uncharacterized protein from Saccharomyces cerevisiae (strain ATCC 204508 / S288c) (Baker's yeast).